An 80-amino-acid polypeptide reads, in one-letter code: Exodeoxyribonuclease 7 small subunit (80 aa).

Belongs to the XseB family. As to quaternary structure, heterooligomer composed of large and small subunits.

It localises to the cytoplasm. The catalysed reaction is Exonucleolytic cleavage in either 5'- to 3'- or 3'- to 5'-direction to yield nucleoside 5'-phosphates.. Its function is as follows. Bidirectionally degrades single-stranded DNA into large acid-insoluble oligonucleotides, which are then degraded further into small acid-soluble oligonucleotides. This is Exodeoxyribonuclease 7 small subunit from Halalkalibacterium halodurans (strain ATCC BAA-125 / DSM 18197 / FERM 7344 / JCM 9153 / C-125) (Bacillus halodurans).